The chain runs to 109 residues: EPIDERMAL PATTERNING FACTOR-like protein 4 (109 aa).

Positions 1–26 are cleaved as a signal peptide; sequence MGTFRRRRRFLLAALVTFALLHLFSA. 3 disulfides stabilise this stretch: Cys-66–Cys-100, Cys-70–Cys-76, and Cys-73–Cys-102.

Belongs to the plant cysteine rich small secretory peptide family. Epidermal patterning factor subfamily. In terms of assembly, interacts with ERECTA. In terms of tissue distribution, expressed at the base of the apical meristem at 3 days after germination. Not detected in the hypocotyl. Expressed in developing stems soon after bolting, in inflorescence stems and in young siliques.

The protein resides in the secreted. Acts primarily as positive regulator of inflorescence growth. Endodermal expression is sufficient for proper inflorescence architecture. Redundantly involved with EPFL6 in procambial development regulation. Controls stomatal patterning. Mediates stomatal development inhibition. TMM (AC Q9SSD1) functions to dampen or block CLL2 signaling. Acts as a growth-regulatory ligand for ERECTA family receptors. This is EPIDERMAL PATTERNING FACTOR-like protein 4 from Arabidopsis thaliana (Mouse-ear cress).